Consider the following 215-residue polypeptide: Urease accessory protein UreG (215 aa).

Residue 15–22 (GPVGSGKT) participates in GTP binding.

The protein belongs to the SIMIBI class G3E GTPase family. UreG subfamily. As to quaternary structure, homodimer. UreD, UreF and UreG form a complex that acts as a GTP-hydrolysis-dependent molecular chaperone, activating the urease apoprotein by helping to assemble the nickel containing metallocenter of UreC. The UreE protein probably delivers the nickel.

The protein localises to the cytoplasm. Functionally, facilitates the functional incorporation of the urease nickel metallocenter. This process requires GTP hydrolysis, probably effectuated by UreG. This chain is Urease accessory protein UreG, found in Alcanivorax borkumensis (strain ATCC 700651 / DSM 11573 / NCIMB 13689 / SK2).